A 572-amino-acid chain; its full sequence is 2-succinyl-5-enolpyruvyl-6-hydroxy-3-cyclohexene-1-carboxylate synthase (572 aa).

It belongs to the TPP enzyme family. MenD subfamily. As to quaternary structure, homodimer. Mg(2+) is required as a cofactor. The cofactor is Mn(2+). Requires thiamine diphosphate as cofactor.

It catalyses the reaction isochorismate + 2-oxoglutarate + H(+) = 5-enolpyruvoyl-6-hydroxy-2-succinyl-cyclohex-3-ene-1-carboxylate + CO2. Its pathway is quinol/quinone metabolism; 1,4-dihydroxy-2-naphthoate biosynthesis; 1,4-dihydroxy-2-naphthoate from chorismate: step 2/7. The protein operates within quinol/quinone metabolism; menaquinone biosynthesis. Functionally, catalyzes the thiamine diphosphate-dependent decarboxylation of 2-oxoglutarate and the subsequent addition of the resulting succinic semialdehyde-thiamine pyrophosphate anion to isochorismate to yield 2-succinyl-5-enolpyruvyl-6-hydroxy-3-cyclohexene-1-carboxylate (SEPHCHC). The polypeptide is 2-succinyl-5-enolpyruvyl-6-hydroxy-3-cyclohexene-1-carboxylate synthase (Shewanella amazonensis (strain ATCC BAA-1098 / SB2B)).